A 42-amino-acid chain; its full sequence is Alpha-lactalbumin I (42 aa).

Positions 1-42 (IDYRKCQASQILKEHGMDKVIPLPELVCTMFHISGLSPQAEV) constitute a C-type lysozyme domain.

It belongs to the glycosyl hydrolase 22 family. In terms of assembly, lactose synthase (LS) is a heterodimer of a catalytic component, beta1,4-galactosyltransferase (beta4Gal-T1) and a regulatory component, alpha-lactalbumin (LA). In terms of tissue distribution, mammary gland specific. Secreted in milk.

Its subcellular location is the secreted. Regulatory subunit of lactose synthase, changes the substrate specificity of galactosyltransferase in the mammary gland making glucose a good acceptor substrate for this enzyme. This enables LS to synthesize lactose, the major carbohydrate component of milk. In other tissues, galactosyltransferase transfers galactose onto the N-acetylglucosamine of the oligosaccharide chains in glycoproteins. The sequence is that of Alpha-lactalbumin I (LALBA) from Macropus giganteus (Eastern gray kangaroo).